The chain runs to 150 residues: Cyanate hydratase (150 aa).

Catalysis depends on residues R91, E94, and S117.

This sequence belongs to the cyanase family.

It carries out the reaction cyanate + hydrogencarbonate + 3 H(+) = NH4(+) + 2 CO2. Functionally, catalyzes the reaction of cyanate with bicarbonate to produce ammonia and carbon dioxide. The sequence is that of Cyanate hydratase from Synechococcus sp. (strain CC9311).